Consider the following 347-residue polypeptide: Phosphoribosylformylglycinamidine cyclo-ligase (347 aa).

This sequence belongs to the AIR synthase family.

Its subcellular location is the cytoplasm. It catalyses the reaction 2-formamido-N(1)-(5-O-phospho-beta-D-ribosyl)acetamidine + ATP = 5-amino-1-(5-phospho-beta-D-ribosyl)imidazole + ADP + phosphate + H(+). It participates in purine metabolism; IMP biosynthesis via de novo pathway; 5-amino-1-(5-phospho-D-ribosyl)imidazole from N(2)-formyl-N(1)-(5-phospho-D-ribosyl)glycinamide: step 2/2. This chain is Phosphoribosylformylglycinamidine cyclo-ligase, found in Prochlorococcus marinus (strain MIT 9301).